Here is a 98-residue protein sequence, read N- to C-terminus: NADH-ubiquinone oxidoreductase chain 4L (98 aa).

A run of 3 helical transmembrane segments spans residues 1–21 (MMPI…GTLI), 28–48 (STLL…AMLI), and 59–79 (APLI…ALLV).

Belongs to the complex I subunit 4L family. Core subunit of respiratory chain NADH dehydrogenase (Complex I) which is composed of 45 different subunits.

The protein localises to the mitochondrion inner membrane. It carries out the reaction a ubiquinone + NADH + 5 H(+)(in) = a ubiquinol + NAD(+) + 4 H(+)(out). Its function is as follows. Core subunit of the mitochondrial membrane respiratory chain NADH dehydrogenase (Complex I) which catalyzes electron transfer from NADH through the respiratory chain, using ubiquinone as an electron acceptor. Part of the enzyme membrane arm which is embedded in the lipid bilayer and involved in proton translocation. The chain is NADH-ubiquinone oxidoreductase chain 4L (MT-ND4L) from Petaurus breviceps (Australian sugar glider).